The chain runs to 113 residues: Antimicrobial peptide microplusin (113 aa).

The signal sequence occupies residues 1–19 (MKSLLVLALLAFGAVLVSA). Intrachain disulfides connect Cys-25–Cys-71, Cys-38–Cys-99, and Cys-60–Cys-65.

The protein resides in the secreted. Functionally, has bacteriostatic activity against Gram-positive bacteria, but not against Gram-negative bacteria. Has fungistatic activity against some but not all fungi. Binds and sequesters copper and iron ions. Copper-chelating activity is crucial for antimicrobial activity against M.luteus. This chain is Antimicrobial peptide microplusin, found in Argas monolakensis (Mono lake bird tick).